We begin with the raw amino-acid sequence, 187 residues long: Auxin-binding protein T92 (187 aa).

The first 20 residues, Met-1–Ser-20, serve as a signal peptide directing secretion. Residues Cys-22 and Cys-177 are joined by a disulfide bond. The Zn(2+) site is built by His-78, His-80, and Glu-84. Asn-117 carries N-linked (GlcNAc...) asparagine glycosylation. A Zn(2+)-binding site is contributed by His-128. Positions Lys-184–Leu-187 match the Prevents secretion from ER motif.

As to quaternary structure, homodimer.

The protein resides in the endoplasmic reticulum lumen. This is probably a receptor for the plant hormone auxin. This Nicotiana tabacum (Common tobacco) protein is Auxin-binding protein T92 (T92).